The sequence spans 102 residues: uncharacterized protein (102 aa).

This is an uncharacterized protein from Acidianus filamentous virus 1 (isolate United States/Yellowstone) (AFV-1).